We begin with the raw amino-acid sequence, 137 residues long: Peptide methionine sulfoxide reductase MsrB (137 aa).

The MsrB domain maps to 7-129 (PEELKNGLSE…NSASLSFTDE (123 aa)). Zn(2+) contacts are provided by Cys46, Cys49, Cys95, and Cys98. Cys118 serves as the catalytic Nucleophile.

Belongs to the MsrB Met sulfoxide reductase family. It depends on Zn(2+) as a cofactor.

The catalysed reaction is L-methionyl-[protein] + [thioredoxin]-disulfide + H2O = L-methionyl-(R)-S-oxide-[protein] + [thioredoxin]-dithiol. The sequence is that of Peptide methionine sulfoxide reductase MsrB from Klebsiella pneumoniae subsp. pneumoniae (strain ATCC 700721 / MGH 78578).